We begin with the raw amino-acid sequence, 408 residues long: Zinc finger protein 764 (408 aa).

Residues Val26–Cys97 form the KRAB domain. A disordered region spans residues Asp91–Pro167. 7 C2H2-type zinc fingers span residues His175–His197, Phe203–His225, His231–His253, Tyr259–His281, Phe287–His309, Tyr315–His337, and Tyr343–His365.

This sequence belongs to the krueppel C2H2-type zinc-finger protein family. In terms of assembly, interacts (via KRAB domain) with NR3C1/GR (via NR LBD domain); the interaction regulates transcription factor activity of NR3C1 by directing its actions toward certain biologic pathways.

Its subcellular location is the nucleus. Its function is as follows. Zinc finger protein that functions as a cofactor for steroid hormone receptors, such as NR3C1/GR. Directs NR3C1/GR transcriptional activity toward specific biologic pathways by changing NR3C1/GR binding and transcriptional activity on the glucocorticoid-responsive genes. This chain is Zinc finger protein 764, found in Homo sapiens (Human).